Here is a 446-residue protein sequence, read N- to C-terminus: D(3) dopamine receptor (446 aa).

Residues 1–32 are Extracellular-facing; that stretch reads MAPLSQISSHINSTCGAENSTGVNRARPHAYY. Residues Asn12 and Asn19 are each glycosylated (N-linked (GlcNAc...) asparagine). The helical transmembrane segment at 33–55 threads the bilayer; the sequence is ALSYCALILAIIFGNGLVCAAVL. At 56 to 65 the chain is on the cytoplasmic side; the sequence is RERALQTTTN. A helical membrane pass occupies residues 66 to 88; the sequence is YLVVSLAVADLLVATLVMPWVVY. Residues 89–104 are Extracellular-facing; sequence LEVTGGVWNFSRICCD. Residue Asn97 is glycosylated (N-linked (GlcNAc...) asparagine). An intrachain disulfide couples Cys103 to Cys181. A helical transmembrane segment spans residues 105–126; sequence VFVTLDVMMCTASILNLCAISI. Residues 127–149 lie on the Cytoplasmic side of the membrane; that stretch reads DRYTAVVMPVHYQHGTGQSSCRR. A helical transmembrane segment spans residues 150-170; that stretch reads VALMITAVWVLAFAVSCPLLF. The Extracellular segment spans residues 171-187; that stretch reads GFNTTGDPSICSISNPD. Asn173 carries an N-linked (GlcNAc...) asparagine glycan. A helical transmembrane segment spans residues 188–209; that stretch reads FVIYSSVVSFYVPFGVTVLVYA. The Cytoplasmic segment spans residues 210 to 375; sequence RIYMVLRQRR…VPLREKKATQ (166 aa). Residues 376–397 traverse the membrane as a helical segment; it reads MVVIVLGAFIVCWLPFFLTHVL. Over 398-412 the chain is Extracellular; that stretch reads NTHCQACHVSPELYR. Residues Cys401 and Cys404 are joined by a disulfide bond. The helical transmembrane segment at 413-432 threads the bilayer; sequence ATTWLGYVNSALNPVIYTTF. Residues 433-446 lie on the Cytoplasmic side of the membrane; sequence NIEFRKAFLKILSC.

It belongs to the G-protein coupled receptor 1 family. As to quaternary structure, interacts with CLIC6. Interacts with GRK4. Interacts with PALM. Interacts with FLNA (via filamin repeat 21); increases PKA-mediated phosphorylation of FLNA. Post-translationally, phosphorylated by GRK4. Palmitoylated.

Its subcellular location is the cell membrane. Its function is as follows. Dopamine receptor whose activity is mediated by G proteins which inhibit adenylyl cyclase. Promotes cell proliferation. This chain is D(3) dopamine receptor (Drd3), found in Mus musculus (Mouse).